Reading from the N-terminus, the 185-residue chain is Auxin-responsive protein IAA34 (185 aa).

An EAR-like (transcriptional repression) motif is present at residues 63–67 (LGLSL). One can recognise a PB1 domain in the interval 92 to 180 (WGYVKVTMDG…ERLRITRRND (89 aa)).

It belongs to the Aux/IAA family. As to quaternary structure, homodimers and heterodimers.

The protein localises to the nucleus. In terms of biological role, aux/IAA proteins are short-lived transcriptional factors that function as repressors of early auxin response genes at low auxin concentrations. Repression is thought to result from the interaction with auxin response factors (ARFs), proteins that bind to the auxin-responsive promoter element (AuxRE). Formation of heterodimers with ARF proteins may alter their ability to modulate early auxin response genes expression. The polypeptide is Auxin-responsive protein IAA34 (IAA34) (Arabidopsis thaliana (Mouse-ear cress)).